The sequence spans 451 residues: MLNMESPQMYADAVQTLAHVDLKKQPQPLPQQATIGQITLTAMSSAQQQQQQQQQQQQQQQQQQQQQQQVTTDANNNATVQDAALLVKQHAMQQMQLSNNNSNNLLQKQMLQQYSTQTDLDELTTQEITLDLQHLIDDQFRDTETLGIFSDMVTSPGGLSATLPPSGMVSAAAKVLQQQQQTLANARQQQHSYGRAALAYMRQAVHSNATYNNHSSDENSSVGSDSSSTIKEEPIDPDYRRHLQESVTGQAAAAFINNSNGLYNAYQSNNLSNNNSSSNNSSNNSSNNSSNSNTNSTNAAQFTNLTTANVLAHHSLPHLTANTAQQLLKHHSKLQQTQQQHAQQQQQHAQQQHRKHSNKHVDKGTEEYRRRRERNNIAVRKSREKAKVRSKEVEERVKSLLKEKDALLRQLSEMTNELSLHKQIYMQLMNHTNPEVSRVCRSFLNTNEHAL.

Disordered regions lie at residues 210–236 (TYNNHSSDENSSVGSDSSSTIKEEPID), 267–298 (QSNNLSNNNSSSNNSSNNSSNNSSNSNTNSTN), and 328–389 (LKHH…AKVR). Composition is skewed to low complexity over residues 218-228 (ENSSVGSDSSS), 268-298 (SNNLSNNNSSSNNSSNNSSNNSSNSNTNSTN), and 334-350 (LQQTQQQHAQQQQQHAQ). Residues 359-370 (KHVDKGTEEYRR) are compositionally biased toward basic and acidic residues. A bZIP domain is found at 365 to 428 (TEEYRRRRER…SLHKQIYMQL (64 aa)). The segment at 369–398 (RRRRERNNIAVRKSREKAKVRSKEVEERVK) is basic motif. A leucine-zipper region spans residues 400–407 (LLKEKDAL).

Belongs to the bZIP family. C/EBP subfamily. In terms of assembly, binds DNA as a dimer and can form stable heterodimers.

Its subcellular location is the nucleus. Functionally, may be required for the expression of gene products mediating border cell migration. Among the DNA sequences that this protein binds with high affinity is a conserved site within the promoter of its gene. This is CCAAT/enhancer-binding protein (slbo) from Drosophila virilis (Fruit fly).